Here is a 341-residue protein sequence, read N- to C-terminus: MKVKDFDFYLPEELIAQHPMEKRDEARLLVLDKETGEIEHKIFKDILDYLTPNDCLVLNNTRVLPARLIGSKEETGGKMEFLLLKRKEKDVWETLVKPGKRAQIGARFIFGNGELKAEVIGMGEEGSRIVKFYYEGIFEEILDQLGQMPLPPYIKEKLDDKEMYQTVYSKEEGSAAAPTAGLHFTEELLKKIEEKGVKLAFLTLHVGLGTFRPVKVEDIQEHVMHSEYYKMDKKTAEIINDTKENGGRVIAVGTTSCRTLETIADIEGKVGEQSGWTDIFIYPGYKYKVVDALITNFHLPQSTLLMLVSALAGKDNIMNAYNVAVEKEYRFFSFGDAMFIK.

This sequence belongs to the QueA family. Monomer.

Its subcellular location is the cytoplasm. It catalyses the reaction 7-aminomethyl-7-carbaguanosine(34) in tRNA + S-adenosyl-L-methionine = epoxyqueuosine(34) in tRNA + adenine + L-methionine + 2 H(+). It functions in the pathway tRNA modification; tRNA-queuosine biosynthesis. Functionally, transfers and isomerizes the ribose moiety from AdoMet to the 7-aminomethyl group of 7-deazaguanine (preQ1-tRNA) to give epoxyqueuosine (oQ-tRNA). In Clostridium botulinum (strain Okra / Type B1), this protein is S-adenosylmethionine:tRNA ribosyltransferase-isomerase.